The primary structure comprises 861 residues: Importin subunit beta-1 (861 aa).

At S2 the chain carries N-acetylserine. HEAT repeat units follow at residues 3 to 35 (TAEFAQLLENSILSPDQNIRLTSETQLKKLSND), 37 to 66 (FLQFAGLSSQVLIDENTKLEGRILAALTLK), 90 to 129 (PEAKNQIKTNALTALVSIEPRIANAAAQLIAAIADIELPH), 134 to 164 (ELMKIMVDNTGAEQPENVKRASLLALGYMCE), 177 to 208 (SNNILIAIVQGAQSTETSKAVRLAALNALADS), 219 to 255 (EGERNYLMQVVCEATQAEDIEVQAAAFGCLCKIMSLY), 260 to 306 (KPYM…ELAQ), 317 to 362 (FALS…AQNC), 367 to 395 (LEPVLEFVEQNITADNWRNREAAVMAFGS), 402 to 442 (KVQR…ADSV), 452 to 484 (LPGVVQACLIGLQDHPKVATNCSWTIINLVEQL), 496 to 530 (YPALVDGLIGAANRIDNEFNARASAFSALTTMVEY), 536 to 586 (AETS…VIRK), 592 to 629 (EPVADMLMGLFFRLLEKKDSAFIEDDVFYAISALAASL), 634 to 669 (EKYLETFSPYLLKALNQVDSPVSITAVGFIADISNS), 675 to 713 (RRYSDAMMNVLAQMISNPNARRELKPAVLSVFGDIASNI), 718 to 764 (IPYL…IVAG), 773 to 812 (FPYVGTIFQFIAQVAEDPQLYSEDATSRAAVGLIGDIAAM), and 819 to 859 (KQFY…KRQL). In terms of domain architecture, Importin N-terminal spans 25-106 (SETQLKKLSN…KTNALTALVS (82 aa)). A Phosphoserine modification is found at S836.

Belongs to the importin beta family. Importin beta-1 subfamily. As to quaternary structure, forms a complex with the importin alpha subunit (SRP1/KAP60). Interacts with Ran (GSP1); interacts specifically with the GTP-bound form of Ran (GTP-Ran), protecting it from GTP hydrolysis and nucleotide exchange. Interacts with nucleoporin NUP1.

Its subcellular location is the cytoplasm. It localises to the nucleus. The protein resides in the nuclear pore complex. In terms of biological role, importin beta subunit that functions in nuclear protein import through association with the importin alpha subunit, which binds to the classical nuclear localization signal (cNLS) in cargo substrates. Docking of the importin/substrate complex to the nuclear pore complex (NPC) is mediated by importin beta through binding to nucleoporin FxFG repeats and the complex is subsequently translocated through the pore by an energy requiring, Ran-dependent mechanism. At the nucleoplasmic side of the NPC, GTP-Ran binds to importin beta and the three components separate, leading to release of the cargo. Importin alpha and beta are re-exported from the nucleus to the cytoplasm where GTP hydrolysis releases Ran from importin beta. The directionality of nuclear import is thought to be conferred by an asymmetric distribution of the GTP- and GDP-bound forms of Ran between the cytoplasm and nucleus. Mediates the nuclear import of histones H2A and H2B. Mediates the nuclear import of transcription factor GCN4. The sequence is that of Importin subunit beta-1 from Saccharomyces cerevisiae (strain ATCC 204508 / S288c) (Baker's yeast).